Here is a 193-residue protein sequence, read N- to C-terminus: 3-isopropylmalate dehydratase small subunit (193 aa).

The protein belongs to the LeuD family. LeuD type 1 subfamily. As to quaternary structure, heterodimer of LeuC and LeuD.

It carries out the reaction (2R,3S)-3-isopropylmalate = (2S)-2-isopropylmalate. The protein operates within amino-acid biosynthesis; L-leucine biosynthesis; L-leucine from 3-methyl-2-oxobutanoate: step 2/4. Functionally, catalyzes the isomerization between 2-isopropylmalate and 3-isopropylmalate, via the formation of 2-isopropylmaleate. The sequence is that of 3-isopropylmalate dehydratase small subunit from Bacillus cereus (strain B4264).